The primary structure comprises 217 residues: Monomethylamine corrinoid protein 1 (217 aa).

The region spanning 1–91 is the B12-binding N-terminal domain; it reads MANQEIFDKL…ELEKNKKEGE (91 aa). Positions 93–217 constitute a B12-binding domain; the sequence is AGLAITFVAE…AAKVALEVMK (125 aa). Histidine 106 serves as a coordination point for methylcob(III)alamin.

Can form a complex with MtmB.

Its pathway is one-carbon metabolism; methanogenesis from methylamine. Functionally, acts as a methyl group carrier between MtmB and MtbA. The polypeptide is Monomethylamine corrinoid protein 1 (mtmC1) (Methanosarcina barkeri).